The following is a 958-amino-acid chain: MMSVLKIENFDPYSCNGIEDRNGMGYSTALLNPIVLGQDLLMSYLSIIEQPKQRGFRFRYVCEGPSHRGLPGASSEKGKKTFPTVKIFNYVGMARIEVDLVTHTDPPRVHAHSLVGKHSNKTGNCIVTVGPEDMTAQFNNLGIVHVTKKSQTEILKEKMKRNILRNTGRNTLTEVEERKIEQEVKDLKKVTDLSIVRLKFTAYLPDSNGAYTLALPPVISDPIHDSKSPGASNLRISRMDKTAGSVKGGDEVYLLCDKVQKDDIEVQFYEDDENGWHAFGDFAPTDVHKQYAIVFRTPPYHTQKIDRPVTVFLQLKRKKGGDVSDSKQFTYYPLEQDKEEVERKRRKDLPTFNNHFYGGGSPMGGAPPGSSFGQGGGSNINYQYTGMNSAFYMSSPAGGGYHSSGHMMKHCSATNSSEKNQQPSISIKKEGEEASACSQTDSATTAQKEAQCQMIMRQANLRMLSLTQRTSRALLDYATTADPRMLLAVQRHLTATQDENGDTPLHLAVIHGQSSVIEQLVQIILSIPNQQILNMSNHLQQTPLHLGVITKQYSVVAFLLKAGADPTILDRYGNSVLHLAVQSEDDKMLGVLLKYPSVGQKNLINMPDYHGLSPVHWSVKMKNEKCLVLLVKAGANVNSAERKSGKSPLHIAVEMDNLNLAVFLVKKLHADINAKTYGGNTPLHLAASRGSPMLTRMLVNEGANVLSENDEPVNKLPSCNSDTSESDSDVQMDTDSDHHGDSDTDSSTAVDSECEHSAEEMHRREQRNIRPHCAMKRRYSGHTAVDLTKSQKVRDILSKHTPGSASWKQKGPEPVNVLALETNTVQRLEKLLNEGQTGADWTELASRLRLQSLVETYKNTSSPTESLLRNYELAGGNLKELINTLQSMGLNEGVELLCKSETYAKHHSPAESKNDSAYESQSMEVDQSSGNLMDDSQKQTIPVSAAELCPTTEPTIGQ.

The RHD domain occupies 40 to 230 (LLMSYLSIIE…DPIHDSKSPG (191 aa)). The Nuclear localization signal signature appears at 343-347 (RKRRK). Disordered stretches follow at residues 350–374 (PTFN…SFGQ) and 411–442 (CSAT…QTDS). A GRR region spans residues 352 to 390 (FNNHFYGGGSPMGGAPPGSSFGQGGGSNINYQYTGMNSA). Gly residues predominate over residues 357-374 (YGGGSPMGGAPPGSSFGQ). Residues 412–425 (SATNSSEKNQQPSI) are compositionally biased toward polar residues. 6 ANK repeats span residues 500-529 (NGDT…SIPN), 539-568 (LQQT…DPTI), 572-603 (YGNS…QKNL), 610-639 (HGLS…NVNS), 644-674 (SGKS…DINA), and 678-707 (GGNT…NVLS). The disordered stretch occupies residues 705–766 (VLSENDEPVN…SAEEMHRREQ (62 aa)). Residues 724-734 (SESDSDVQMDT) show a composition bias toward acidic residues. Basic and acidic residues predominate over residues 753–766 (ECEHSAEEMHRREQ). One can recognise a Death domain in the interval 815 to 901 (VNVLALETNT…EGVELLCKSE (87 aa)). Over residues 904–916 (AKHHSPAESKNDS) the composition is skewed to basic and acidic residues. Positions 904–958 (AKHHSPAESKNDSAYESQSMEVDQSSGNLMDDSQKQTIPVSAAELCPTTEPTIGQ) are disordered. Over residues 917–931 (AYESQSMEVDQSSGN) the composition is skewed to polar residues.

As to quaternary structure, active NF-kappa-B is a heterodimer of an about 52 kDa DNA-binding subunit and the weak DNA-binding subunit p65. Two heterodimers might form a labile tetramer. In terms of processing, while translation occurs, the particular unfolded structure after the GRR repeat promotes the generation of p52 making it an acceptable substrate for the proteasome. This process is known as cotranslational processing. The processed form is active and the unprocessed form acts as an inhibitor (I kappa B-like), being able to form cytosolic complexes with NF-kappa B, trapping it in the cytoplasm. Complete folding of the region downstream of the GRR repeat precludes processing. Constitutive processing is tightly suppressed by its C-terminal processing inhibitory domain, named PID, which contains the death domain. As to expression, expressed in spleen.

It is found in the nucleus. Its subcellular location is the cytoplasm. Its function is as follows. Appears to have dual functions such as cytoplasmic retention of attached NF-kappa-B proteins and generation of p52 by a cotranslational processing. The proteasome-mediated process ensures the production of both p52 and p100 and preserves their independent function. p52 binds to the kappa-B consensus sequence 5'-GGRNNYYCC-3', located in the enhancer region of genes involved in immune response and acute phase reactions. In concert with RELB, may play a role in the regulation of the circadian clock. The sequence is that of Nuclear factor NF-kappa-B p100 subunit (nfkb2) from Xenopus laevis (African clawed frog).